A 138-amino-acid chain; its full sequence is Holo-[acyl-carrier-protein] synthase (138 aa).

Positions 8 and 56 each coordinate Mg(2+).

The protein belongs to the P-Pant transferase superfamily. AcpS family. Mg(2+) serves as cofactor.

The protein resides in the cytoplasm. The enzyme catalyses apo-[ACP] + CoA = holo-[ACP] + adenosine 3',5'-bisphosphate + H(+). Transfers the 4'-phosphopantetheine moiety from coenzyme A to a Ser of acyl-carrier-protein. In Thermoanaerobacter pseudethanolicus (strain ATCC 33223 / 39E) (Clostridium thermohydrosulfuricum), this protein is Holo-[acyl-carrier-protein] synthase.